The primary structure comprises 339 residues: MKILNLGDWHLGVKADDEWIRGIQIDGIKQAIEYSKKNGITTWIQYGDIFDVRKAITHKTMEFAREIVQTLDDAGITLHTIVGNHDLHYKNVMHPNASTELLAKYPNVKVYDKPTTVDFDGCLIDLIPWMCEENTGEILEHIKTSSASFCVGHWELNGFYFYKGMKSHGLEPDFLKTYKEVWSGHFHTISEAANVRYIGTPWTLTAGDENDPRGFWMFDTETERTEFIPNNTTWHRRIHYPFKGKIDYKDFTNLSVRVIVTEVDKNLTKFESELEKVVHSLRVVSKIDNSVESDDSEEVEVQSLQTLMEEYINAIPDITDSDREALIQYANQLYVEATQ.

The protein to phage T5 protein D12 and to yeast RAD52. As to quaternary structure, consists of two subunits: gp46 and gp47.

Exonuclease that plays a role in viral genome replication, DNA recombination, and host DNA degradation. The sequence is that of Exonuclease subunit 1 (47) from Escherichia coli (Bacteriophage T4).